A 664-amino-acid polypeptide reads, in one-letter code: Macoilin (664 aa).

The next 4 helical transmembrane spans lie at 28 to 48, 75 to 95, 120 to 140, and 154 to 174; these read TFLY…DFVV, AFSV…LLFI, VCLP…AIRF, and FAAH…KSYV. Over residues 253–265 the composition is skewed to basic and acidic residues; the sequence is REKGKEKDKDAKK. Positions 253–274 are disordered; the sequence is REKGKEKDKDAKKHNLGINNNN. At S305 the chain carries Phosphoserine. Polar residues predominate over residues 320 to 348; that stretch reads KNYKNASGVVNSSPRSHSATNGSIPSSSS. The tract at residues 320 to 375 is disordered; sequence KNYKNASGVVNSSPRSHSATNGSIPSSSSKNEKKQKCTSKSPSTHKDLMENCIPNN. N324 is a glycosylation site (N-linked (GlcNAc...) asparagine). S332 is modified (phosphoserine). N-linked (GlcNAc...) asparagine glycans are attached at residues N340 and N452. The tract at residues 630–664 is disordered; that stretch reads TSPLSPVSPHYSSKFVETSPSGLDPNASVYQPLKK. Residues S631 and S634 each carry the phosphoserine modification. Residue N655 is glycosylated (N-linked (GlcNAc...) asparagine).

The protein belongs to the macoilin family.

The protein resides in the rough endoplasmic reticulum membrane. It localises to the nucleus membrane. Plays a role in the regulation of neuronal activity. This is Macoilin (MACO1) from Pan troglodytes (Chimpanzee).